The following is a 185-amino-acid chain: Ribosome-recycling factor (185 aa).

This sequence belongs to the RRF family.

Its subcellular location is the cytoplasm. Its function is as follows. Responsible for the release of ribosomes from messenger RNA at the termination of protein biosynthesis. May increase the efficiency of translation by recycling ribosomes from one round of translation to another. The protein is Ribosome-recycling factor of Shewanella pealeana (strain ATCC 700345 / ANG-SQ1).